Here is an 81-residue protein sequence, read N- to C-terminus: Sulfur carrier protein TusA (81 aa).

Cys-19 functions as the Cysteine persulfide intermediate in the catalytic mechanism.

The protein belongs to the sulfur carrier protein TusA family.

The protein resides in the cytoplasm. In terms of biological role, sulfur carrier protein which probably makes part of a sulfur-relay system. This chain is Sulfur carrier protein TusA, found in Shewanella sp. (strain MR-4).